A 293-amino-acid chain; its full sequence is Glycine--tRNA ligase alpha subunit (293 aa).

This sequence belongs to the class-II aminoacyl-tRNA synthetase family. Tetramer of two alpha and two beta subunits.

Its subcellular location is the cytoplasm. The catalysed reaction is tRNA(Gly) + glycine + ATP = glycyl-tRNA(Gly) + AMP + diphosphate. In Oceanobacillus iheyensis (strain DSM 14371 / CIP 107618 / JCM 11309 / KCTC 3954 / HTE831), this protein is Glycine--tRNA ligase alpha subunit.